The following is a 130-amino-acid chain: Small ribosomal subunit protein uS9 (130 aa).

The protein belongs to the universal ribosomal protein uS9 family.

This Anaeromyxobacter dehalogenans (strain 2CP-1 / ATCC BAA-258) protein is Small ribosomal subunit protein uS9.